Reading from the N-terminus, the 333-residue chain is Adenosine deaminase (333 aa).

Zn(2+) is bound by residues His-12 and His-14. Substrate-binding residues include His-14, Asp-16, and Gly-170. His-197 contacts Zn(2+). Catalysis depends on Glu-200, which acts as the Proton donor. Residue Asp-278 participates in Zn(2+) binding. Asp-279 lines the substrate pocket.

Belongs to the metallo-dependent hydrolases superfamily. Adenosine and AMP deaminases family. Adenosine deaminase subfamily. Zn(2+) is required as a cofactor.

It carries out the reaction adenosine + H2O + H(+) = inosine + NH4(+). The catalysed reaction is 2'-deoxyadenosine + H2O + H(+) = 2'-deoxyinosine + NH4(+). Functionally, catalyzes the hydrolytic deamination of adenosine and 2-deoxyadenosine. The polypeptide is Adenosine deaminase (Shigella sonnei (strain Ss046)).